A 344-amino-acid chain; its full sequence is Phosphate acyltransferase (344 aa).

Belongs to the PlsX family. In terms of assembly, homodimer. Probably interacts with PlsY.

Its subcellular location is the cytoplasm. It carries out the reaction a fatty acyl-[ACP] + phosphate = an acyl phosphate + holo-[ACP]. The protein operates within lipid metabolism; phospholipid metabolism. Functionally, catalyzes the reversible formation of acyl-phosphate (acyl-PO(4)) from acyl-[acyl-carrier-protein] (acyl-ACP). This enzyme utilizes acyl-ACP as fatty acyl donor, but not acyl-CoA. This chain is Phosphate acyltransferase, found in Yersinia enterocolitica serotype O:8 / biotype 1B (strain NCTC 13174 / 8081).